The chain runs to 826 residues: Zinc phosphodiesterase ELAC protein 2 (826 aa).

The N-terminal 16 residues, 1-16, are a transit peptide targeting the mitochondrion; the sequence is MWALCSLLRSAAGRTM. 2 disordered regions span residues 16–51 and 188–231; these read MSQG…PSGC and EQRR…VSQR. Basic and acidic residues predominate over residues 27-38; it reads ARRERPRKDPLR. A phosphoserine mark is found at S199, S208, S212, S229, S618, and S736. The span at 208–224 shows a compositional bias: basic and acidic residues; that stretch reads SPERSSDSESNENEPHL. Residues 798 to 826 form a disordered region; the sequence is ELAGGLEDGEPQQKRAHTEEPQAKKVRAQ. Over residues 808-820 the composition is skewed to basic and acidic residues; the sequence is PQQKRAHTEEPQA.

It belongs to the RNase Z family. In terms of assembly, homodimer. Interacts with PTCD1. Zn(2+) serves as cofactor. In terms of tissue distribution, widely expressed. Highly expressed in heart, placenta, liver, skeletal muscle, kidney, pancreas, testis and ovary. Weakly expressed in brain, lung, spleen, thymus, prostate, small intestine, colon and leukocytes.

It localises to the mitochondrion. The protein localises to the mitochondrion matrix. Its subcellular location is the mitochondrion nucleoid. It is found in the nucleus. The catalysed reaction is Endonucleolytic cleavage of RNA, removing extra 3' nucleotides from tRNA precursor, generating 3' termini of tRNAs. A 3'-hydroxy group is left at the tRNA terminus and a 5'-phosphoryl group is left at the trailer molecule.. Its function is as follows. Zinc phosphodiesterase, which displays mitochondrial tRNA 3'-processing endonuclease activity. Involved in tRNA maturation, by removing a 3'-trailer from precursor tRNA. Associates with mitochondrial DNA complexes at the nucleoids to initiate RNA processing and ribosome assembly. The sequence is that of Zinc phosphodiesterase ELAC protein 2 (ELAC2) from Homo sapiens (Human).